Here is a 177-residue protein sequence, read N- to C-terminus: Immunity protein CdiI-YPIII (177 aa).

In terms of assembly, interacts with the C-terminal DNase fragment (residues 954-1077) of cognate toxin CdiA-YPIII.

Functionally, immunity protein component of a toxin-immunity protein module, which functions as a cellular contact-dependent growth inhibition (CDI) system. CDI modules allow bacteria to communicate with and inhibit the growth of closely related neighboring bacteria in a contact-dependent fashion. Neutralizes the toxic activity of cognate toxin CdiA-YPIII (residues 954-1077). Does not inhibit toxic activity of CdiA from other toxin-immunity modules. The polypeptide is Immunity protein CdiI-YPIII (Yersinia pseudotuberculosis serotype O:3 (strain YPIII)).